We begin with the raw amino-acid sequence, 122 residues long: Large ribosomal subunit protein bL12 (122 aa).

This sequence belongs to the bacterial ribosomal protein bL12 family. In terms of assembly, homodimer. Part of the ribosomal stalk of the 50S ribosomal subunit. Forms a multimeric L10(L12)X complex, where L10 forms an elongated spine to which 2 to 4 L12 dimers bind in a sequential fashion. Binds GTP-bound translation factors.

In terms of biological role, forms part of the ribosomal stalk which helps the ribosome interact with GTP-bound translation factors. Is thus essential for accurate translation. This is Large ribosomal subunit protein bL12 from Pseudomonas entomophila (strain L48).